Consider the following 833-residue polypeptide: Lon protease (833 aa).

Positions 3 to 198 (YPFMATRGVI…LIFSFLVELK (196 aa)) constitute a Lon N-terminal domain. Residue 390–397 (GPPGTGKT) participates in ATP binding. Residues 627-808 (YERIGAVNGL…DEIFENLFGK (182 aa)) enclose the Lon proteolytic domain. Residues S714 and K757 contribute to the active site.

This sequence belongs to the peptidase S16 family. In terms of assembly, homohexamer. Organized in a ring with a central cavity.

It localises to the cytoplasm. The catalysed reaction is Hydrolysis of proteins in presence of ATP.. In terms of biological role, ATP-dependent serine protease that mediates the selective degradation of mutant and abnormal proteins as well as certain short-lived regulatory proteins. Required for cellular homeostasis and for survival from DNA damage and developmental changes induced by stress. Degrades polypeptides processively to yield small peptide fragments that are 5 to 10 amino acids long. Binds to DNA in a double-stranded, site-specific manner. The polypeptide is Lon protease (Mycoplasma mobile (strain ATCC 43663 / 163K / NCTC 11711) (Mesomycoplasma mobile)).